A 248-amino-acid chain; its full sequence is Probable phosphatase VCM66_A0854 (248 aa).

Positions 8, 10, 16, 41, 74, 102, 132, 194, and 196 each coordinate Zn(2+).

Belongs to the PHP family. Zn(2+) serves as cofactor.

The sequence is that of Probable phosphatase VCM66_A0854 from Vibrio cholerae serotype O1 (strain M66-2).